The following is a 325-amino-acid chain: Intelectin (325 aa).

The signal sequence occupies residues 1-23 (MKYCVLLIMIHLLLVELPQFPEA). Positions 44–266 (IRSSYIGRSC…AAMAICSGVK (223 aa)) constitute a Fibrinogen C-terminal domain. Cysteine 53 and cysteine 82 are joined by a disulfide. Ca(2+) contacts are provided by histidine 98, glutamate 99, asparagine 101, glycine 104, glycine 109, aspartate 110, aspartate 145, glutamate 274, glutamate 286, and aspartate 294. 2 cysteine pairs are disulfide-bonded: cysteine 106–cysteine 292 and cysteine 262–cysteine 277. A carbohydrate contacts are provided by residues 274–275 (EH) and glutamate 286.

In terms of tissue distribution, expressed at high levels in caudal kidney, liver, and swim bladder. Also expressed in gill, spleen, intestine and head kidney. Not detected in heart.

Functionally, may be involved in innate immune surveillance. May specifically recognize carbohydrate chains of pathogens and bacterial components in a calcium-dependent manner. In vitro binds N-acetylglucosamine residues. This Oncorhynchus mykiss (Rainbow trout) protein is Intelectin.